The following is a 400-amino-acid chain: Serine/threonine transporter SstT (400 aa).

The next 9 helical transmembrane spans lie at 9 to 29 (LVTQ…VWPA), 36 to 56 (ILGS…VFVL), 75 to 95 (VLVL…VASM), 134 to 154 (ALLE…GLAL), 175 to 195 (VIQL…ASTF), 209 to 229 (LLAV…PLIV), 281 to 301 (IAIP…ISVL), 323 to 343 (VVAS…LLLI), and 349 to 369 (LFGI…IIGI).

Belongs to the dicarboxylate/amino acid:cation symporter (DAACS) (TC 2.A.23) family.

The protein localises to the cell inner membrane. It catalyses the reaction L-serine(in) + Na(+)(in) = L-serine(out) + Na(+)(out). The catalysed reaction is L-threonine(in) + Na(+)(in) = L-threonine(out) + Na(+)(out). Its function is as follows. Involved in the import of serine and threonine into the cell, with the concomitant import of sodium (symport system). The protein is Serine/threonine transporter SstT of Acidovorax sp. (strain JS42).